The primary structure comprises 100 residues: Urease subunit gamma (100 aa).

It belongs to the urease gamma subunit family. In terms of assembly, heterotrimer of UreA (gamma), UreB (beta) and UreC (alpha) subunits. Three heterotrimers associate to form the active enzyme.

The protein resides in the cytoplasm. The enzyme catalyses urea + 2 H2O + H(+) = hydrogencarbonate + 2 NH4(+). Its pathway is nitrogen metabolism; urea degradation; CO(2) and NH(3) from urea (urease route): step 1/1. This chain is Urease subunit gamma, found in Pseudomonas putida (strain ATCC 700007 / DSM 6899 / JCM 31910 / BCRC 17059 / LMG 24140 / F1).